Reading from the N-terminus, the 538-residue chain is SWM histone demethylase complex subunit phf2 (538 aa).

Disordered stretches follow at residues 28-47, 98-150, and 198-222; these read RFPN…NQNG, EIES…SSPL, and TKSG…RRRG. The segment covering 98 to 111 has biased composition (basic and acidic residues); sequence EIESSKNQETDAKS. Residues 232-288 form a PHD-type zinc finger; that stretch reads AMKCSVCQRLQSPPKNRIVFCDGCNTPFHQLCHEPYISDELLDSPNGEWFCDDCIRR. A compositionally biased stretch (polar residues) spans 367–392; that stretch reads GDQYLSLNNGTESQSKTTKHSTSLPS. Residues 367–396 are disordered; the sequence is GDQYLSLNNGTESQSKTTKHSTSLPSTEPV.

In terms of assembly, component of the SWM histone demethylase complex composed of at least lsd1, lsd2, phf1 and phf2.

It localises to the nucleus. Its function is as follows. Component of the SWM histone demethylase complex that specifically demethylates H3K9me2, a specific tag for epigenetic transcriptional activation, thereby acting as a corepressor. Has a role in regulating heterochromatin propagation and euchromatic transcription. This is SWM histone demethylase complex subunit phf2 (phf2) from Schizosaccharomyces pombe (strain 972 / ATCC 24843) (Fission yeast).